The chain runs to 192 residues: UPF0301 protein BceJ2315_30870 (192 aa).

Belongs to the UPF0301 (AlgH) family.

This Burkholderia cenocepacia (strain ATCC BAA-245 / DSM 16553 / LMG 16656 / NCTC 13227 / J2315 / CF5610) (Burkholderia cepacia (strain J2315)) protein is UPF0301 protein BceJ2315_30870.